Reading from the N-terminus, the 71-residue chain is Large ribosomal subunit protein eL38 (71 aa).

Belongs to the eukaryotic ribosomal protein eL38 family.

In Ixodes scapularis (Black-legged tick), this protein is Large ribosomal subunit protein eL38 (RpL38).